A 688-amino-acid chain; its full sequence is Glycine--tRNA ligase beta subunit (688 aa).

Belongs to the class-II aminoacyl-tRNA synthetase family. Tetramer of two alpha and two beta subunits.

The protein localises to the cytoplasm. The catalysed reaction is tRNA(Gly) + glycine + ATP = glycyl-tRNA(Gly) + AMP + diphosphate. This Histophilus somni (strain 2336) (Haemophilus somnus) protein is Glycine--tRNA ligase beta subunit.